The chain runs to 73 residues: Translation initiation factor IF-1 (73 aa).

The region spanning 1-73 is the S1-like domain; sequence MAKKDGVIEI…TRGRIVYRYK (73 aa).

The protein belongs to the IF-1 family. In terms of assembly, component of the 30S ribosomal translation pre-initiation complex which assembles on the 30S ribosome in the order IF-2 and IF-3, IF-1 and N-formylmethionyl-tRNA(fMet); mRNA recruitment can occur at any time during PIC assembly.

Its subcellular location is the cytoplasm. In terms of biological role, one of the essential components for the initiation of protein synthesis. Stabilizes the binding of IF-2 and IF-3 on the 30S subunit to which N-formylmethionyl-tRNA(fMet) subsequently binds. Helps modulate mRNA selection, yielding the 30S pre-initiation complex (PIC). Upon addition of the 50S ribosomal subunit IF-1, IF-2 and IF-3 are released leaving the mature 70S translation initiation complex. This is Translation initiation factor IF-1 from Paenarthrobacter aurescens (strain TC1).